The primary structure comprises 382 residues: uncharacterized protein (382 aa).

Residues 1–25 (MKKWMAAVFVMMLMLCFGGIENVKA) form the signal peptide. The active-site Nucleophile is the S186. Catalysis depends on residues D354 and H357.

This sequence belongs to the 'GDSL' lipolytic enzyme family.

This is an uncharacterized protein from Bacillus subtilis (strain 168).